Here is a 217-residue protein sequence, read N- to C-terminus: Ribonuclease HII (217 aa).

In terms of domain architecture, RNase H type-2 spans 25-215; it reads KLIAGVDESG…VKHVISDINR (191 aa). D31, E32, and D123 together coordinate a divalent metal cation.

This sequence belongs to the RNase HII family. Mn(2+) serves as cofactor. Mg(2+) is required as a cofactor.

The protein resides in the cytoplasm. It catalyses the reaction Endonucleolytic cleavage to 5'-phosphomonoester.. Functionally, endonuclease that specifically degrades the RNA of RNA-DNA hybrids. This Blochmanniella pennsylvanica (strain BPEN) protein is Ribonuclease HII.